A 115-amino-acid chain; its full sequence is Iron-sulfur cluster insertion protein ErpA (115 aa).

Residues Cys-42, Cys-106, and Cys-108 each coordinate iron-sulfur cluster.

Belongs to the HesB/IscA family. In terms of assembly, homodimer. Iron-sulfur cluster is required as a cofactor.

Functionally, required for insertion of 4Fe-4S clusters for at least IspG. The sequence is that of Iron-sulfur cluster insertion protein ErpA from Baumannia cicadellinicola subsp. Homalodisca coagulata.